The following is a 396-amino-acid chain: Elongation factor Tu (396 aa).

One can recognise a tr-type G domain in the interval 10–205 (KPHVNIGTIG…AVDESIPDPV (196 aa)). The G1 stretch occupies residues 19–26 (GHVDHGKT). 19-26 (GHVDHGKT) is a binding site for GTP. Position 26 (threonine 26) interacts with Mg(2+). Residues 62-66 (GITIN) are G2. The tract at residues 83-86 (DAPG) is G3. GTP-binding positions include 83 to 87 (DAPGH) and 138 to 141 (NKAD). The G4 stretch occupies residues 138 to 141 (NKAD). The G5 stretch occupies residues 175–177 (SGL).

It belongs to the TRAFAC class translation factor GTPase superfamily. Classic translation factor GTPase family. EF-Tu/EF-1A subfamily. Monomer.

It is found in the cytoplasm. It catalyses the reaction GTP + H2O = GDP + phosphate + H(+). In terms of biological role, GTP hydrolase that promotes the GTP-dependent binding of aminoacyl-tRNA to the A-site of ribosomes during protein biosynthesis. The protein is Elongation factor Tu of Nocardia farcinica (strain IFM 10152).